The primary structure comprises 307 residues: Histone deacetylase HDT1 (307 aa).

Residues 98–112 (EDEMDLDSEDEDEEL) are compositionally biased toward acidic residues. Positions 98–280 (EDEMDLDSED…KSGGSVPCKP (183 aa)) are disordered. A compositionally biased stretch (basic and acidic residues) spans 119-132 (ENGKADEKKQKSQE). Positions 151–197 (DDDSDEDETDDSDEDETDDSDEGLSSEEGDDDSSDEDDTSDDEEEDT) are enriched in acidic residues. Over residues 198 to 211 (PTPKKPEVGKKRPA) the composition is skewed to basic and acidic residues. The span at 265-277 (SPKSAPKSGGSVP) shows a compositional bias: low complexity. The C2H2-type; degenerate zinc finger occupies 276–299 (VPCKPCSKSFISETALQAHSRAKM).

It belongs to the histone deacetylase HD2 family. As to quaternary structure, multimer. Isolated as a trimer composed of 3 proteins of 39, 42 and 45 kDa, possibly a homotrimer with different phosphorylation status or a heterotrimer with HDT2 and/or HDT3. The N-terminus is blocked. In terms of processing, phosphorylated. Required for enzyme activity.

The protein resides in the nucleus. It localises to the nucleolus. With respect to regulation, inhibited by 3-(4-Aroyl-1-methyl-1H-pyrrol-2-yl)-N-hydroxy-2-propenamides. 3-(1-methyl-4-phenylacetyl-1H-pyrrol-2-yl)-N-hydroxy-2-propenamide 1b and 3-[1-methyl-4-(3-phenyl-2-propenoyl)-1H-pyrrol-2-yl]-N-hydroxy-2-propenamide 1c are very potent inhibitors. Mediates the deacetylation of lysine residues on the N-terminal part of the core histones (H2A, H2B, H3 and H4). Histone deacetylation gives a tag for epigenetic repression and plays an important role in transcriptional regulation, cell cycle progression and developmental events. Able to deacetylate all 4 core histones. The polypeptide is Histone deacetylase HDT1 (HDT1) (Zea mays (Maize)).